Here is a 200-residue protein sequence, read N- to C-terminus: Glycerol-3-phosphate acyltransferase (200 aa).

The next 5 helical transmembrane spans lie at 1 to 21, 51 to 71, 84 to 104, 116 to 136, and 159 to 179; these read MITV…FAVV, VAAA…VVVA, VIAS…FLAF, ILLG…IIVA, and FLLQ…LLIL.

Belongs to the PlsY family. Probably interacts with PlsX.

The protein localises to the cell inner membrane. The enzyme catalyses an acyl phosphate + sn-glycerol 3-phosphate = a 1-acyl-sn-glycero-3-phosphate + phosphate. Its pathway is lipid metabolism; phospholipid metabolism. Catalyzes the transfer of an acyl group from acyl-phosphate (acyl-PO(4)) to glycerol-3-phosphate (G3P) to form lysophosphatidic acid (LPA). This enzyme utilizes acyl-phosphate as fatty acyl donor, but not acyl-CoA or acyl-ACP. This is Glycerol-3-phosphate acyltransferase from Nitrosomonas eutropha (strain DSM 101675 / C91 / Nm57).